Reading from the N-terminus, the 637-residue chain is Chaperone protein HtpG (637 aa).

An a; substrate-binding region spans residues 1–345 (MSQQETHGFQ…SNDLPLNVSR (345 aa)). Residues 346-562 (EILQDNHITK…EGEMSSQMIK (217 aa)) are b. The interval 563–637 (LMQAAGQPVP…MNQMLLANLK (75 aa)) is c.

The protein belongs to the heat shock protein 90 family. Homodimer.

The protein resides in the cytoplasm. Molecular chaperone. Has ATPase activity. This is Chaperone protein HtpG from Shewanella sp. (strain ANA-3).